A 204-amino-acid polypeptide reads, in one-letter code: FMN-dependent NADH:quinone oxidoreductase 2 (204 aa).

Residues Ser-10 and 16–18 (SIS) contribute to the FMN site.

The protein belongs to the azoreductase type 1 family. Homodimer. FMN is required as a cofactor.

It carries out the reaction 2 a quinone + NADH + H(+) = 2 a 1,4-benzosemiquinone + NAD(+). The enzyme catalyses N,N-dimethyl-1,4-phenylenediamine + anthranilate + 2 NAD(+) = 2-(4-dimethylaminophenyl)diazenylbenzoate + 2 NADH + 2 H(+). In terms of biological role, quinone reductase that provides resistance to thiol-specific stress caused by electrophilic quinones. Functionally, also exhibits azoreductase activity. Catalyzes the reductive cleavage of the azo bond in aromatic azo compounds to the corresponding amines. This Jannaschia sp. (strain CCS1) protein is FMN-dependent NADH:quinone oxidoreductase 2.